The chain runs to 78 residues: MAQQRRGGRRRRKVDFIAANHIEYIDYKDTDLLRRFISERGKILPRRVTGTSAKNQRKLTIAIKRARIMGLLPFVAED.

Belongs to the bacterial ribosomal protein bS18 family. Part of the 30S ribosomal subunit. Forms a tight heterodimer with protein bS6.

Functionally, binds as a heterodimer with protein bS6 to the central domain of the 16S rRNA, where it helps stabilize the platform of the 30S subunit. The chain is Small ribosomal subunit protein bS18 from Limosilactobacillus reuteri (strain DSM 20016) (Lactobacillus reuteri).